The following is a 274-amino-acid chain: Undecaprenyl-diphosphatase (274 aa).

Helical transmembrane passes span 4–24, 46–66, 86–106, 109–129, 145–165, 188–208, 214–234, and 250–270; these read LLVI…LLPI, VVFE…EYRV, INVA…SDFI, VLFS…IIMW, ISYA…IPGT, FSFF…LWEA, IEDM…TFAV, and FAWY…TGVI.

This sequence belongs to the UppP family.

It is found in the cell inner membrane. It carries out the reaction di-trans,octa-cis-undecaprenyl diphosphate + H2O = di-trans,octa-cis-undecaprenyl phosphate + phosphate + H(+). In terms of biological role, catalyzes the dephosphorylation of undecaprenyl diphosphate (UPP). Confers resistance to bacitracin. In Cellvibrio japonicus (strain Ueda107) (Pseudomonas fluorescens subsp. cellulosa), this protein is Undecaprenyl-diphosphatase.